The chain runs to 517 residues: Putative ribose/galactose/methyl galactoside import ATP-binding protein 1 (517 aa).

2 ABC transporter domains span residues L23–P258 and T269–S515. ATP is bound at residue G55–S62.

This sequence belongs to the ABC transporter superfamily. Carbohydrate importer 2 (CUT2) (TC 3.A.1.2) family.

The protein resides in the cell inner membrane. The catalysed reaction is D-ribose(out) + ATP + H2O = D-ribose(in) + ADP + phosphate + H(+). It catalyses the reaction D-galactose(out) + ATP + H2O = D-galactose(in) + ADP + phosphate + H(+). Part of an ABC transporter complex involved in carbohydrate import. Could be involved in ribose, galactose and/or methyl galactoside import. Responsible for energy coupling to the transport system. This is Putative ribose/galactose/methyl galactoside import ATP-binding protein 1 from Burkholderia ambifaria (strain ATCC BAA-244 / DSM 16087 / CCUG 44356 / LMG 19182 / AMMD) (Burkholderia cepacia (strain AMMD)).